A 547-amino-acid polypeptide reads, in one-letter code: MRASVMLCAALGGFLFGYDTGVINAALFQMKDHFGFSEHSWQYALIVAIAIAGAFVGAFISGFISAAFGRRPCIAVADALFVIGSVLMGAAPNVEVVLVSRVIVGLAIGISSATIPVYLAEVTSPKHRGATIVLNNLFLTGGQFVAAGFTAIMVVFTSKNIGWRVAIGIGALPAVVQAFCLLFFLPESPRWLLSKGHADRAKAVADKFEVDLCEFQEGDELPSVRIDYRPLMARDMRFRVVLSSGLQIIQQFSGINTIMYYSSVILYDAGFRDAIMPVVLSIPLAFMNALFTAVAIFTVDRFGRRRMLLISVFGCLVLLVVIAIIGFFIGTRISYSVGGGLFLALLAVFLALYAPGIGCIPWVIMGEIFPTHLRTSAASVATMANWGANVLVSQVFPILMGAIGVGGTFTIISGLMALGCIFVYFFAVETKGLTLEQIDNMFRKRAGLPPRFHEEGESGESGAGYREDGDLGRLATEDVCDLSSLGNRVVSFAKAEDAFTEVAMPDRHAVSNKFEERATSSSSDPQSLENQDEVRQAAIKAAPHEPK.

The Cytoplasmic portion of the chain corresponds to Met-1–Arg-2. The chain crosses the membrane as a helical span at residues Ala-3–Ala-25. Residues Ala-26 to Tyr-43 are Extracellular-facing. Residues Ala-44–Ile-64 form a helical membrane-spanning segment. At Ser-65 to Asp-78 the chain is on the cytoplasmic side. Residues Ala-79 to Val-99 form a helical membrane-spanning segment. At Ser-100–Arg-101 the chain is on the extracellular side. A helical membrane pass occupies residues Val-102–Val-122. Residues Thr-123–Asn-136 are Cytoplasmic-facing. The helical transmembrane segment at Leu-137–Thr-157 threads the bilayer. At Ser-158 to Arg-164 the chain is on the extracellular side. The helical transmembrane segment at Val-165–Leu-185 threads the bilayer. At Pro-186–Gly-245 the chain is on the cytoplasmic side. The helical transmembrane segment at Leu-246–Leu-266 threads the bilayer. Residues Tyr-267–Met-276 lie on the Extracellular side of the membrane. A helical transmembrane segment spans residues Pro-277–Phe-297. Topologically, residues Thr-298–Leu-308 are cytoplasmic. A helical transmembrane segment spans residues Leu-309 to Ile-329. Topologically, residues Gly-330–Gly-339 are extracellular. Residues Gly-340 to Ile-360 traverse the membrane as a helical segment. Residues Pro-361–Asn-385 are Cytoplasmic-facing. A helical membrane pass occupies residues Trp-386–Gly-406. Gly-407 is a topological domain (extracellular). Residues Thr-408 to Val-428 traverse the membrane as a helical segment. The Cytoplasmic portion of the chain corresponds to Glu-429–Lys-547. 2 disordered regions span residues Pro-449–Asp-468 and Val-510–Lys-547. Residues Thr-519–Glu-529 show a composition bias toward polar residues.

This sequence belongs to the major facilitator superfamily. Sugar transporter (TC 2.A.1.1) family.

Its subcellular location is the membrane. This Leishmania donovani protein is Membrane transporter D1.